The primary structure comprises 261 residues: Cytochrome c oxidase subunit 3 (261 aa).

Over 1-15 (MTHQTHAYHMVNPSP) the chain is Mitochondrial matrix. The chain crosses the membrane as a helical span at residues 16–34 (WPLTGALSALLMTSGLIMW). Residues 35-40 (FHFNST) lie on the Mitochondrial intermembrane side of the membrane. The helical transmembrane segment at 41–66 (TLLMLGLTTNMLTMYQWWRDVIREST) threads the bilayer. Topologically, residues 67–72 (FQGHHT) are mitochondrial matrix. Residues 73 to 105 (PNVQKGLRYGMILFIISEVLFFTGFFWAFYHSS) traverse the membrane as a helical segment. At 106-128 (LAPTPELGGCWPPTGIHPLNPLE) the chain is on the mitochondrial intermembrane side. The helical transmembrane segment at 129 to 152 (VPLLNTSVLLASGVSITWAHHSLM) threads the bilayer. The Mitochondrial matrix segment spans residues 153 to 155 (EGN). A helical membrane pass occupies residues 156–183 (RNHMLQALFITIALGVYFTLLQASEYYE). Topologically, residues 184 to 190 (APFTISD) are mitochondrial intermembrane. The helical transmembrane segment at 191 to 223 (GVYGSTFFVATGFHGLHVIIGSTFLIVCFFRQL) threads the bilayer. The Mitochondrial matrix portion of the chain corresponds to 224–232 (KFHFTSSHH). Residues 233–256 (FGFEAAAWYWHFVDVVWLFLYVSI) traverse the membrane as a helical segment. The Mitochondrial intermembrane portion of the chain corresponds to 257–261 (YWWGS).

It belongs to the cytochrome c oxidase subunit 3 family. As to quaternary structure, component of the cytochrome c oxidase (complex IV, CIV), a multisubunit enzyme composed of 14 subunits. The complex is composed of a catalytic core of 3 subunits MT-CO1, MT-CO2 and MT-CO3, encoded in the mitochondrial DNA, and 11 supernumerary subunits COX4I, COX5A, COX5B, COX6A, COX6B, COX6C, COX7A, COX7B, COX7C, COX8 and NDUFA4, which are encoded in the nuclear genome. The complex exists as a monomer or a dimer and forms supercomplexes (SCs) in the inner mitochondrial membrane with NADH-ubiquinone oxidoreductase (complex I, CI) and ubiquinol-cytochrome c oxidoreductase (cytochrome b-c1 complex, complex III, CIII), resulting in different assemblies (supercomplex SCI(1)III(2)IV(1) and megacomplex MCI(2)III(2)IV(2)).

The protein resides in the mitochondrion inner membrane. It catalyses the reaction 4 Fe(II)-[cytochrome c] + O2 + 8 H(+)(in) = 4 Fe(III)-[cytochrome c] + 2 H2O + 4 H(+)(out). In terms of biological role, component of the cytochrome c oxidase, the last enzyme in the mitochondrial electron transport chain which drives oxidative phosphorylation. The respiratory chain contains 3 multisubunit complexes succinate dehydrogenase (complex II, CII), ubiquinol-cytochrome c oxidoreductase (cytochrome b-c1 complex, complex III, CIII) and cytochrome c oxidase (complex IV, CIV), that cooperate to transfer electrons derived from NADH and succinate to molecular oxygen, creating an electrochemical gradient over the inner membrane that drives transmembrane transport and the ATP synthase. Cytochrome c oxidase is the component of the respiratory chain that catalyzes the reduction of oxygen to water. Electrons originating from reduced cytochrome c in the intermembrane space (IMS) are transferred via the dinuclear copper A center (CU(A)) of subunit 2 and heme A of subunit 1 to the active site in subunit 1, a binuclear center (BNC) formed by heme A3 and copper B (CU(B)). The BNC reduces molecular oxygen to 2 water molecules using 4 electrons from cytochrome c in the IMS and 4 protons from the mitochondrial matrix. The polypeptide is Cytochrome c oxidase subunit 3 (MT-CO3) (Gazella bennettii (Chinkara)).